Reading from the N-terminus, the 266-residue chain is Zinc transporter ZupT (266 aa).

A run of 8 helical transmembrane segments spans residues 8-28 (LLLT…ALAV), 36-56 (LALS…MEII), 71-91 (AGAW…WAID), 123-143 (GIFT…AVFF), 152-172 (GIVI…AVAV), 185-205 (FSLS…GYTL), 209-229 (FLTP…MVYI), and 246-266 (LAIT…LLLT). Residues Asn134 and Glu137 each coordinate Fe(2+). Residues Glu137 and His162 each coordinate Zn(2+). 3 residues coordinate Fe(2+): Asn163, Glu166, and Glu195. Glu166 contributes to the Zn(2+) binding site.

This sequence belongs to the ZIP transporter (TC 2.A.5) family. ZupT subfamily.

The protein resides in the cell inner membrane. It carries out the reaction Zn(2+)(in) = Zn(2+)(out). Mediates zinc uptake. May also transport other divalent cations. This chain is Zinc transporter ZupT, found in Chlorobium luteolum (strain DSM 273 / BCRC 81028 / 2530) (Pelodictyon luteolum).